The chain runs to 266 residues: UPF0294 protein YafD (266 aa).

The protein belongs to the UPF0294 family.

The protein resides in the cytoplasm. In Salmonella typhi, this protein is UPF0294 protein YafD.